A 610-amino-acid chain; its full sequence is Cytosolic 5'-nucleotidase 1B (610 aa).

Disordered stretches follow at residues 1-34 and 101-277; these read MSQT…DKTG and GSQE…DEDD. The span at 9–34 shows a compositional bias: basic and acidic residues; it reads KKNEPGMRSSKESLEAEKRKESDKTG. Residues 119–132 are compositionally biased toward polar residues; that stretch reads SQWSRISRSPSTKA. Over residues 148 to 166 the composition is skewed to low complexity; it reads PSSSTSSRTPSTSPSLHDS. The segment covering 167–183 has biased composition (pro residues); that stretch reads SPPPLSGQPSLQPPASP. Over residues 236 to 265 the composition is skewed to polar residues; the sequence is SRTSPTEWKSSSQRRGIYPASTQLDRNSLS. Asp-467 (nucleophile) is an active-site residue.

Belongs to the 5'-nucleotidase type 3 family. Requires Mg(2+) as cofactor. As to expression, highly expressed in testis, placenta and pancreas. Detected at lower levels in heart, kidney, liver and lung.

It localises to the cytoplasm. It catalyses the reaction a ribonucleoside 5'-phosphate + H2O = a ribonucleoside + phosphate. It carries out the reaction AMP + H2O = adenosine + phosphate. With respect to regulation, activated by ADP. Its function is as follows. Catalyzes the hydrolysis of nucleotide monophosphates, releasing inorganic phosphate and the corresponding nucleoside, AMP is the major substrate. The chain is Cytosolic 5'-nucleotidase 1B (NT5C1B) from Homo sapiens (Human).